A 168-amino-acid polypeptide reads, in one-letter code: ATP synthase F(1) complex subunit delta, mitochondrial (168 aa).

The transit peptide at 1 to 22 (MLPAALLRHPGLRRLVLQARTY) directs the protein to the mitochondrion. N6-acetyllysine; alternate is present on residues Lys136 and Lys165. N6-succinyllysine; alternate occurs at positions 136 and 165.

This sequence belongs to the ATPase epsilon chain family. In terms of assembly, component of the ATP synthase complex composed at least of ATP5F1A/subunit alpha, ATP5F1B/subunit beta, ATP5MC1/subunit c (homooctomer), MT-ATP6/subunit a, MT-ATP8/subunit 8, ATP5ME/subunit e, ATP5MF/subunit f, ATP5MG/subunit g, ATP5MK/subunit k, ATP5MJ/subunit j, ATP5F1C/subunit gamma, ATP5F1D/subunit delta, ATP5F1E/subunit epsilon, ATP5PF/subunit F6, ATP5PB/subunit b, ATP5PD/subunit d, ATP5PO/subunit OSCP. ATP synthase complex consists of a soluble F(1) head domain (subunits alpha(3) and beta(3)) - the catalytic core - and a membrane F(0) domain - the membrane proton channel (subunits c, a, 8, e, f, g, k and j). These two domains are linked by a central stalk (subunits gamma, delta, and epsilon) rotating inside the F1 region and a stationary peripheral stalk (subunits F6, b, d, and OSCP). Component of a complex composed at least by ATPIF1, ATP5F1A, ATP5F1B, ATP5F1C AND ATP5F1E.

Its subcellular location is the mitochondrion. It is found in the mitochondrion inner membrane. Subunit delta, of the mitochondrial membrane ATP synthase complex (F(1)F(0) ATP synthase or Complex V) that produces ATP from ADP in the presence of a proton gradient across the membrane which is generated by electron transport complexes of the respiratory chain. ATP synthase complex consist of a soluble F(1) head domain - the catalytic core - and a membrane F(1) domain - the membrane proton channel. These two domains are linked by a central stalk rotating inside the F(1) region and a stationary peripheral stalk. During catalysis, ATP synthesis in the catalytic domain of F(1) is coupled via a rotary mechanism of the central stalk subunits to proton translocation. In vivo, can only synthesize ATP although its ATP hydrolase activity can be activated artificially in vitro. With the central stalk subunit gamma, is essential for the biogenesis of F(1) catalytic part of the ATP synthase complex namely in the formation of F1 assembly intermediate. The sequence is that of ATP synthase F(1) complex subunit delta, mitochondrial from Rattus norvegicus (Rat).